Reading from the N-terminus, the 479-residue chain is Spindly-like protein spdl-1 (479 aa).

Coiled-coil stretches lie at residues 4-180 (DEEK…EGEL), 210-250 (EEDL…RFNV), and 321-357 (LMKDNEKYVTIIRGLQQEVENLKADIVQLQFDNKCAH).

As to quaternary structure, interacts with Zwilch homolog zwl-1, a component of the RZZ complex. Interacts with mdf-1 and mdf-2.

The protein resides in the chromosome. Its subcellular location is the centromere. It localises to the kinetochore. It is found in the cytoplasm. The protein localises to the cytoskeleton. The protein resides in the spindle pole. Transient kinetochore component required for chromosome and spindle pole alignment and chromosome segregation during mitosis. Functions downstream of the RZZ complex to mediate kinetochore-microtubule attachments and nuclear envelope breakdown during cell division. Required for kinetochore assembly and localizes the checkpoint proteins mdf-1 and mdf-2, dynein and dynactin to unattached kinetochores. Dynein is believed to control the initial lateral interaction between the kinetochore and spindle microtubules and to facilitate the subsequent formation of end-on kinetochore-microtubule attachments mediated by the NDC80 complex. Required for embryonic development. The sequence is that of Spindly-like protein spdl-1 from Caenorhabditis elegans.